The primary structure comprises 462 residues: Serine--tRNA ligase, cytoplasmic (462 aa).

A Glycyl lysine isopeptide (Lys-Gly) (interchain with G-Cter in URM1) cross-link involves residue Lys241. 246-248 (TSE) lines the L-serine pocket. Residues 279-281 (RRE) and Val295 each bind ATP. An L-serine-binding site is contributed by Glu302. Residues Lys350 and Lys351 each participate in a glycyl lysine isopeptide (Lys-Gly) (interchain with G-Cter in URM1) cross-link. 366-369 (ELVS) lines the ATP pocket. Cys373 and Cys400 each carry cysteine persulfide. Position 404 (Thr404) interacts with L-serine.

This sequence belongs to the class-II aminoacyl-tRNA synthetase family. Type-1 seryl-tRNA synthetase subfamily. As to quaternary structure, homodimer; the tRNA molecule probably binds across the dimer. Interacts with ABP140; interaction is required for the tRNA N(3)-methylcytidine methyltransferase activity of ABP140. Post-translationally, conjugated to URM1, a ubiquitin-like protein, in response to oxidative stresses. The attachment of URM1 to lysine residues exclusively depends on the presence of a peroxidatic cysteine in the target protein, with low specificity for the particular residue, motif, or structural context at which urmylation can occur. The URM1-conjugation reaction is mechanistically and directly coupled to the process of cysteine persulfidation, transfering the sulfur atom of the URM1 thiocarboxyl group to redox-active cysteine residues in the target protein if it is exposed to oxidative conditions. Persulfidated on specific redox-active cysteine residues. Persulfidation (also called protein S-sulfhydration) may provide a molecular mechanism that enables cells to protect vulnerable cysteine residues from reactive oxygen species (ROS) under stress conditions.

The protein resides in the cytoplasm. Its subcellular location is the cytosol. The enzyme catalyses tRNA(Ser) + L-serine + ATP = L-seryl-tRNA(Ser) + AMP + diphosphate + H(+). Its function is as follows. Catalyzes the attachment of serine to tRNA(Ser) in a two-step reaction: serine is first activated by ATP to form Ser-AMP and then transferred to the acceptor end of tRNA(Ser). The polypeptide is Serine--tRNA ligase, cytoplasmic (SES1) (Saccharomyces cerevisiae (strain ATCC 204508 / S288c) (Baker's yeast)).